The chain runs to 347 residues: NADH-ubiquinone oxidoreductase chain 2 (347 aa).

10 helical membrane-spanning segments follow: residues 3-23 (PLIFIIIMFTLILGTVITMIS), 26-46 (WLLIWMGLEMNMFSMIPIIMM), 67-87 (SMLLMMGVIINLYYSGQWTIM), 96-116 (YMMTIALAMKLGLAPFHFWVP), 149-169 (LNLNLMLTLAILSILIGGWGG), 178-198 (IMAYSSIAHMGWMTAIIMYNT), 200-220 (LMMLNLVIYLMMTITMFALFI), 239-259 (ILTTMLLTTLLSLGGLPPLSG), 274-294 (NMLLLPTTMAIMALLNLYFYM), and 325-345 (LSPTLITLSTMLIPLTPMMLI).

The protein belongs to the complex I subunit 2 family. Core subunit of respiratory chain NADH dehydrogenase (Complex I) which is composed of 45 different subunits. Interacts with TMEM242.

It localises to the mitochondrion inner membrane. It carries out the reaction a ubiquinone + NADH + 5 H(+)(in) = a ubiquinol + NAD(+) + 4 H(+)(out). Functionally, core subunit of the mitochondrial membrane respiratory chain NADH dehydrogenase (Complex I) which catalyzes electron transfer from NADH through the respiratory chain, using ubiquinone as an electron acceptor. Essential for the catalytic activity and assembly of complex I. The chain is NADH-ubiquinone oxidoreductase chain 2 from Dasypus novemcinctus (Nine-banded armadillo).